We begin with the raw amino-acid sequence, 127 residues long: Holo-[acyl-carrier-protein] synthase (127 aa).

2 residues coordinate Mg(2+): Asp8 and Glu57.

The protein belongs to the P-Pant transferase superfamily. AcpS family. The cofactor is Mg(2+).

The protein resides in the cytoplasm. The enzyme catalyses apo-[ACP] + CoA = holo-[ACP] + adenosine 3',5'-bisphosphate + H(+). In terms of biological role, transfers the 4'-phosphopantetheine moiety from coenzyme A to a Ser of acyl-carrier-protein. This is Holo-[acyl-carrier-protein] synthase from Vesicomyosocius okutanii subsp. Calyptogena okutanii (strain HA).